A 250-amino-acid polypeptide reads, in one-letter code: NAD(P)H-quinone oxidoreductase subunit K (250 aa).

[4Fe-4S] cluster-binding residues include cysteine 63, cysteine 64, cysteine 128, and cysteine 159.

It belongs to the complex I 20 kDa subunit family. In terms of assembly, NDH-1 can be composed of about 15 different subunits; different subcomplexes with different compositions have been identified which probably have different functions. [4Fe-4S] cluster serves as cofactor.

Its subcellular location is the cellular thylakoid membrane. The catalysed reaction is a plastoquinone + NADH + (n+1) H(+)(in) = a plastoquinol + NAD(+) + n H(+)(out). The enzyme catalyses a plastoquinone + NADPH + (n+1) H(+)(in) = a plastoquinol + NADP(+) + n H(+)(out). In terms of biological role, NDH-1 shuttles electrons from an unknown electron donor, via FMN and iron-sulfur (Fe-S) centers, to quinones in the respiratory and/or the photosynthetic chain. The immediate electron acceptor for the enzyme in this species is believed to be plastoquinone. Couples the redox reaction to proton translocation, and thus conserves the redox energy in a proton gradient. Cyanobacterial NDH-1 also plays a role in inorganic carbon-concentration. This Rippkaea orientalis (strain PCC 8801 / RF-1) (Cyanothece sp. (strain PCC 8801)) protein is NAD(P)H-quinone oxidoreductase subunit K.